The sequence spans 542 residues: Probable protein kinase UbiB (542 aa).

The region spanning 123–505 (DFDEQALASA…ADNKTYNVKM (383 aa)) is the Protein kinase domain. Residues 129–137 (LASASIAQV) and Lys-156 each bind ATP. Asp-291 acts as the Proton acceptor in catalysis. Residues 506–526 (IIMGSIILSLLWQFNSLPLWL) form a helical membrane-spanning segment.

Belongs to the ABC1 family. UbiB subfamily.

It is found in the cell inner membrane. It participates in cofactor biosynthesis; ubiquinone biosynthesis [regulation]. Is probably a protein kinase regulator of UbiI activity which is involved in aerobic coenzyme Q (ubiquinone) biosynthesis. The protein is Probable protein kinase UbiB of Haemophilus ducreyi (strain 35000HP / ATCC 700724).